Reading from the N-terminus, the 484-residue chain is tRNA-2-methylthio-N(6)-dimethylallyladenosine synthase (484 aa).

One can recognise an MTTase N-terminal domain in the interval 29-149 (GVFHIHTLGC…LPKLLDQNRA (121 aa)). [4Fe-4S] cluster contacts are provided by cysteine 38, cysteine 78, cysteine 112, cysteine 186, cysteine 190, and cysteine 193. Positions 172–401 (RASRISSWVA…VALQEQITEE (230 aa)) constitute a Radical SAM core domain. In terms of domain architecture, TRAM spans 404-474 (ATFEGRDVEV…RHNLLADPDV (71 aa)).

The protein belongs to the methylthiotransferase family. MiaB subfamily. In terms of assembly, monomer. [4Fe-4S] cluster serves as cofactor.

It localises to the cytoplasm. It catalyses the reaction N(6)-dimethylallyladenosine(37) in tRNA + (sulfur carrier)-SH + AH2 + 2 S-adenosyl-L-methionine = 2-methylsulfanyl-N(6)-dimethylallyladenosine(37) in tRNA + (sulfur carrier)-H + 5'-deoxyadenosine + L-methionine + A + S-adenosyl-L-homocysteine + 2 H(+). In terms of biological role, catalyzes the methylthiolation of N6-(dimethylallyl)adenosine (i(6)A), leading to the formation of 2-methylthio-N6-(dimethylallyl)adenosine (ms(2)i(6)A) at position 37 in tRNAs that read codons beginning with uridine. The sequence is that of tRNA-2-methylthio-N(6)-dimethylallyladenosine synthase from Bifidobacterium longum (strain DJO10A).